We begin with the raw amino-acid sequence, 83 residues long: uncharacterized protein (83 aa).

It belongs to the chlamydial CPn_0711/CT_665/TC_0036 family.

This is an uncharacterized protein from Chlamydia trachomatis serovar D (strain ATCC VR-885 / DSM 19411 / UW-3/Cx).